A 168-amino-acid polypeptide reads, in one-letter code: Cell division inhibitor SulA (168 aa).

The interval 105-111 (ALLTGNY) is ftsZ binding. The interval 161–168 (KIHSTLYH) is lon protease binding.

It belongs to the SulA family. As to quaternary structure, interacts with FtsZ. In terms of processing, is rapidly cleaved and degraded by the Lon protease once DNA damage is repaired.

Component of the SOS system and an inhibitor of cell division. Accumulation of SulA causes rapid cessation of cell division and the appearance of long, non-septate filaments. In the presence of GTP, binds a polymerization-competent form of FtsZ in a 1:1 ratio, thus inhibiting FtsZ polymerization and therefore preventing it from participating in the assembly of the Z ring. This mechanism prevents the premature segregation of damaged DNA to daughter cells during cell division. The chain is Cell division inhibitor SulA from Pectobacterium carotovorum subsp. carotovorum (strain PC1).